A 222-amino-acid polypeptide reads, in one-letter code: MSGGTTKAAENAKADLPRLMKALRDQGVTDPQVLKAIETTPRDLFTPDLFKDRSWEDSALPIACGQTISQPYIVGLMTQALTVEPRSRVLEIGTGSGYQTTILSKVSRLVYTIERYRTLMKEAEARFNTLGLTNVITKFGDGGEGWAEQAPFDRIMVTAAAEDDPKRLLSQLKPNGVLVAPVGKGPVQSLRRYAGDGKGGFRVEILCDVRFVPLLAGVAKDQ.

Serine 69 is a catalytic residue.

Belongs to the methyltransferase superfamily. L-isoaspartyl/D-aspartyl protein methyltransferase family.

It localises to the cytoplasm. It catalyses the reaction [protein]-L-isoaspartate + S-adenosyl-L-methionine = [protein]-L-isoaspartate alpha-methyl ester + S-adenosyl-L-homocysteine. Its function is as follows. Catalyzes the methyl esterification of L-isoaspartyl residues in peptides and proteins that result from spontaneous decomposition of normal L-aspartyl and L-asparaginyl residues. It plays a role in the repair and/or degradation of damaged proteins. This chain is Protein-L-isoaspartate O-methyltransferase, found in Caulobacter vibrioides (strain NA1000 / CB15N) (Caulobacter crescentus).